The sequence spans 200 residues: Pyridoxal 5'-phosphate synthase subunit PdxT (200 aa).

L-glutamine is bound at residue 52-54 (GES). Residue Cys84 is the Nucleophile of the active site. L-glutamine-binding positions include Arg116 and 145–146 (IR). Residues His181 and Glu183 each act as charge relay system in the active site.

Belongs to the glutaminase PdxT/SNO family. As to quaternary structure, in the presence of PdxS, forms a dodecamer of heterodimers. Only shows activity in the heterodimer.

The catalysed reaction is aldehydo-D-ribose 5-phosphate + D-glyceraldehyde 3-phosphate + L-glutamine = pyridoxal 5'-phosphate + L-glutamate + phosphate + 3 H2O + H(+). It catalyses the reaction L-glutamine + H2O = L-glutamate + NH4(+). The protein operates within cofactor biosynthesis; pyridoxal 5'-phosphate biosynthesis. In terms of biological role, catalyzes the hydrolysis of glutamine to glutamate and ammonia as part of the biosynthesis of pyridoxal 5'-phosphate. The resulting ammonia molecule is channeled to the active site of PdxS. The protein is Pyridoxal 5'-phosphate synthase subunit PdxT of Saccharolobus islandicus (strain L.S.2.15 / Lassen #1) (Sulfolobus islandicus).